A 208-amino-acid polypeptide reads, in one-letter code: Ypt/Rab-type GTPase ypt71 (208 aa).

Residues 17-23, 33-40, G66, 124-127, and 158-160 each bind GTP; these read SGVGKTC, FSREYKAT, NQID, and SAK. Residues 37–45 carry the Effector region motif; it reads YKATIGADF. S-geranylgeranyl cysteine attachment occurs at residues C206 and C208. The residue at position 208 (C208) is a Cysteine methyl ester.

This sequence belongs to the small GTPase superfamily. Rab family.

The protein resides in the vacuole membrane. With respect to regulation, rab activation is generally mediated by a guanine exchange factor (GEF), while inactivation through hydrolysis of bound GTP is catalyzed by a GTPase activating protein (GAP). Its function is as follows. Ypt/Rab-type GTPases are key regulators of membrane trafficking and intracellular vesicular transport. They act as molecular switches that convert between GTP-bound and GDP-bound states, and regulate virtually all steps of membrane traffic from the formation of the transport vesicle at the donor membrane to its fusion at the target membrane. In the GDP-bound state, Ypt proteins are predominantly cytosolic, solubilized through the interaction with a GDP dissociation inhibitor (GDI). In the GTP-bound state, the proteins are membrane bound and interact with specific effector proteins that select cargo, promote vesicle movement, or verify the correct site of fusion. Act antagonistically to ypt7 in regulating vacuolar morphology, promoting vacuolar fission. The chain is Ypt/Rab-type GTPase ypt71 (ypt71) from Schizosaccharomyces pombe (strain 972 / ATCC 24843) (Fission yeast).